A 290-amino-acid chain; its full sequence is MEPDLNEEESERIRTSRNRRSLEHRRNSLLPFQWKATNNSRWMAQVVASEFSLVAFLLLLVMVFSKKWLYPSKSRFHQRYPQNVTKRVYTSIHSMSTGLLYICVSKSCPSSDNGEDNFKMWTIHPVFGVAKISFTLAIGLGFVLTTWLHLPYLPCLQRMPFFGLIGIILSFCEVTLIFLTLLLFPVNLWIYELRKNISVPIGWSYFIGWLVLILYFTCGILCYLNHKNYWSLIMSSTTINTACSSLGPESLVSPSQTPSSQENSQESPKDDQKPSSPDKVVSPPQPDTTG.

Serine 28 carries the post-translational modification Phosphoserine. 4 helical membrane passes run 44-64 (AQVV…VMVF), 125-145 (PVFG…FVLT), 164-184 (LIGI…LLLF), and 201-221 (IGWS…CGIL). The disordered stretch occupies residues 247-290 (GPESLVSPSQTPSSQENSQESPKDDQKPSSPDKVVSPPQPDTTG). Residues 252 to 266 (VSPSQTPSSQENSQE) show a composition bias toward polar residues.

In terms of tissue distribution, expressed in testis.

The protein resides in the membrane. Component of the outer dense fibers (ODF) of spermatozoa which could be involved in sperm tail structure, sperm movement and general organization of cellular cytoskeleton. The polypeptide is Outer dense fiber protein 4 (Odf4) (Mus musculus (Mouse)).